A 243-amino-acid polypeptide reads, in one-letter code: Ubiquinone/menaquinone biosynthesis C-methyltransferase UbiE (243 aa).

S-adenosyl-L-methionine-binding positions include Thr-69, Asp-90, and 116-117; that span reads DA.

It belongs to the class I-like SAM-binding methyltransferase superfamily. MenG/UbiE family.

It carries out the reaction a 2-demethylmenaquinol + S-adenosyl-L-methionine = a menaquinol + S-adenosyl-L-homocysteine + H(+). It catalyses the reaction a 2-methoxy-6-(all-trans-polyprenyl)benzene-1,4-diol + S-adenosyl-L-methionine = a 5-methoxy-2-methyl-3-(all-trans-polyprenyl)benzene-1,4-diol + S-adenosyl-L-homocysteine + H(+). It participates in quinol/quinone metabolism; menaquinone biosynthesis; menaquinol from 1,4-dihydroxy-2-naphthoate: step 2/2. The protein operates within cofactor biosynthesis; ubiquinone biosynthesis. In terms of biological role, methyltransferase required for the conversion of demethylmenaquinol (DMKH2) to menaquinol (MKH2) and the conversion of 2-polyprenyl-6-methoxy-1,4-benzoquinol (DDMQH2) to 2-polyprenyl-3-methyl-6-methoxy-1,4-benzoquinol (DMQH2). This Paraburkholderia xenovorans (strain LB400) protein is Ubiquinone/menaquinone biosynthesis C-methyltransferase UbiE.